The primary structure comprises 117 residues: Immunoglobulin heavy variable 1-45 (117 aa).

The signal sequence occupies residues 1–19 (MDWTWRILFLVAAVTDAYS). The framework-1 stretch occupies residues 20–44 (QMQLVQSGAEVKKTGSSVKVSCKAS). Positions 20–117 (QMQLVQSGAE…EDTAMYYCAR (98 aa)) constitute an Ig-like domain. A disulfide bond links cysteine 41 and cysteine 115. A complementarity-determining-1 region spans residues 45–52 (GYTFTYRY). The framework-2 stretch occupies residues 53–69 (LHWVRQAPGQALEWMGW). The tract at residues 70 to 77 (ITPFNGNT) is complementarity-determining-2. The tract at residues 78-115 (NYAQKFQDRVTITRDRSMSTAYMELSSLRSEDTAMYYC) is framework-3. The segment at 116-117 (AR) is complementarity-determining-3.

Immunoglobulins are composed of two identical heavy chains and two identical light chains; disulfide-linked.

The protein localises to the secreted. The protein resides in the cell membrane. In terms of biological role, v region of the variable domain of immunoglobulin heavy chains that participates in the antigen recognition. Immunoglobulins, also known as antibodies, are membrane-bound or secreted glycoproteins produced by B lymphocytes. In the recognition phase of humoral immunity, the membrane-bound immunoglobulins serve as receptors which, upon binding of a specific antigen, trigger the clonal expansion and differentiation of B lymphocytes into immunoglobulins-secreting plasma cells. Secreted immunoglobulins mediate the effector phase of humoral immunity, which results in the elimination of bound antigens. The antigen binding site is formed by the variable domain of one heavy chain, together with that of its associated light chain. Thus, each immunoglobulin has two antigen binding sites with remarkable affinity for a particular antigen. The variable domains are assembled by a process called V-(D)-J rearrangement and can then be subjected to somatic hypermutations which, after exposure to antigen and selection, allow affinity maturation for a particular antigen. This Homo sapiens (Human) protein is Immunoglobulin heavy variable 1-45.